The following is a 1097-amino-acid chain: Protein STICHEL-like 3 (1097 aa).

Disordered stretches follow at residues 1-22 (MTTT…NNRI), 74-168 (SLRD…YRIG), 220-293 (NVRP…GFGE), 321-358 (GRSL…DSSS), and 400-436 (DSDL…LTEK). The span at 10–20 (RVASSSSTRNN) shows a compositional bias: polar residues. The span at 95-113 (LPKKGDLVEGGRRSVDLKK) shows a compositional bias: basic and acidic residues. A compositionally biased stretch (polar residues) spans 126-136 (PVVNFGTSKVT). The segment covering 137-168 (PSDERSGPVSGERDSGRRVKREESSRKSYRIG) has biased composition (basic and acidic residues). Over residues 227–241 (YGGGGGGGNTRGCAG) the composition is skewed to gly residues. The segment covering 245 to 259 (RPKRRKFRGTRRVRG) has biased composition (basic residues). Basic and acidic residues-rich tracts occupy residues 281–291 (VEKHDGEKEGF) and 332–345 (KGGR…RNGS). Residues 346–358 (DKMMIQSDDDSSS) are compositionally biased toward low complexity. A compositionally biased stretch (basic residues) spans 411–429 (EKKHKKKSHVNARHRHRQQ). 472–479 (GPNGTGKT) serves as a coordination point for ATP. Zn(2+) contacts are provided by Cys491, Cys500, Cys503, and Cys506. Residues 742–770 (KEDMEKLRQALKTLSEAEKQLRVSNDKLT) are a coiled coil. Disordered stretches follow at residues 790–828 (SSTA…DSRK), 913–932 (DPRN…DKSL), and 956–1003 (VTES…SQSI). 2 stretches are compositionally biased toward basic and acidic residues: residues 796–807 (GGRESSDHHLDP) and 818–828 (GLDRRRGDSRK). The span at 993–1003 (ASQSQNQSQSI) shows a compositional bias: polar residues.

It belongs to the DnaX/STICHEL family.

This Arabidopsis thaliana (Mouse-ear cress) protein is Protein STICHEL-like 3.